The chain runs to 273 residues: Undecaprenyl-diphosphatase (273 aa).

A run of 8 helical transmembrane segments spans residues 4 to 24 (IELL…WLPI), 45 to 65 (FMSM…VVLF), 84 to 104 (TFTL…MIPF), 112 to 132 (FFNP…FIII), 149 to 169 (ITYQ…IPGT), 187 to 207 (YVAA…ASLL), 219 to 239 (AEIV…IIVI), and 251 to 271 (FKVF…YFLL).

The protein belongs to the UppP family.

The protein resides in the cell membrane. The catalysed reaction is di-trans,octa-cis-undecaprenyl diphosphate + H2O = di-trans,octa-cis-undecaprenyl phosphate + phosphate + H(+). Its function is as follows. Catalyzes the dephosphorylation of undecaprenyl diphosphate (UPP). Confers resistance to bacitracin. In Lachnoclostridium phytofermentans (strain ATCC 700394 / DSM 18823 / ISDg) (Clostridium phytofermentans), this protein is Undecaprenyl-diphosphatase.